The following is a 606-amino-acid chain: Vacuolar calcium ion transporter (606 aa).

Positions M1–M110 are disordered. Residues M1–A137 lie on the Cytoplasmic side of the membrane. Low complexity predominate over residues P18 to L30. A compositionally biased stretch (polar residues) spans Q36 to S56. The helical transmembrane segment at I138–L158 threads the bilayer. Residues A159 to D170 are Vacuolar-facing. Residues T171–A191 form a helical membrane-spanning segment. Topologically, residues T192–G204 are cytoplasmic. Residues G205 to I225 form a helical membrane-spanning segment. Residues K226–L236 lie on the Vacuolar side of the membrane. The chain crosses the membrane as a helical span at residues V237–V257. The Cytoplasmic segment spans residues R258–N272. A helical membrane pass occupies residues A273 to I293. At S294 to L313 the chain is on the vacuolar side. A helical transmembrane segment spans residues L314 to F334. Topologically, residues Q335 to N437 are cytoplasmic. Residues D376–P434 form a disordered region. The segment covering E423–T433 has biased composition (acidic residues). Residues V438–F458 traverse the membrane as a helical segment. The Vacuolar portion of the chain corresponds to L459–W477. Residues V478–V498 form a helical membrane-spanning segment. At S499–D505 the chain is on the cytoplasmic side. Residues L506 to I526 form a helical membrane-spanning segment. Residues E527 to K535 are Vacuolar-facing. The helical transmembrane segment at P536–V556 threads the bilayer. The Cytoplasmic portion of the chain corresponds to N557–N566. The chain crosses the membrane as a helical span at residues W567 to Y587. The Vacuolar portion of the chain corresponds to P588–G606.

This sequence belongs to the Ca(2+):cation antiporter (CaCA) (TC 2.A.19) family.

The protein resides in the vacuole membrane. Its function is as follows. Has a role in promoting intracellular calcium ion sequestration via the exchange of calcium ions for hydrogen ions across the vacuolar membrane. In Cryptococcus neoformans var. grubii serotype A (strain H99 / ATCC 208821 / CBS 10515 / FGSC 9487) (Filobasidiella neoformans var. grubii), this protein is Vacuolar calcium ion transporter.